The sequence spans 242 residues: D-proline reductase subunit gamma (242 aa).

The active-site Nucleophile is the Sec-152. Position 152 (Sec-152) is a non-standard amino acid, selenocysteine.

In terms of assembly, consists of 3 subunits of 23, 26 and 45 kDa (alpha, gamma and beta respectively). The molecular weight of the complex is approximately 870 kDa, suggesting a decameric structure, if all 3 subunits are present in equal stoichiometry. This subunit is carbonylated in vitro on an unidentified residue.

It localises to the cytoplasm. The catalysed reaction is [PrdC protein]-Se-L-selenocysteinyl-S-L-cysteine + 5-aminopentanoate = [PrdC protein]-L-selenocysteine/L-cysteine + D-proline. Its function is as follows. D-proline reductase catalyzes the reductive cleavage of a C-N bond in D-proline resulting in the formation of 5-aminovalerate. The alpha subunit has been shown to bind D-proline, presumably via the pyruvoyl group. This Acetoanaerobium sticklandii (strain ATCC 12662 / DSM 519 / JCM 1433 / CCUG 9281 / NCIMB 10654 / HF) (Clostridium sticklandii) protein is D-proline reductase subunit gamma (prdB).